We begin with the raw amino-acid sequence, 252 residues long: Probable endonuclease 4 (252 aa).

His56, His96, Glu129, Asp162, His165, His191, Asp204, His206, and Glu233 together coordinate Zn(2+).

Belongs to the AP endonuclease 2 family. Zn(2+) serves as cofactor.

It catalyses the reaction Endonucleolytic cleavage to 5'-phosphooligonucleotide end-products.. Endonuclease IV plays a role in DNA repair. It cleaves phosphodiester bonds at apurinic or apyrimidinic (AP) sites, generating a 3'-hydroxyl group and a 5'-terminal sugar phosphate. The protein is Probable endonuclease 4 of Mycobacterium marinum (strain ATCC BAA-535 / M).